The following is a 495-amino-acid chain: UDP-glycosyltransferase 73C5 (495 aa).

The helical transmembrane segment at 146 to 162 threads the bilayer; it reads ILFHGMGCFCLLCMHVL. UDP-alpha-D-glucose-binding positions include Ser-296, 356–358, 373–381, and 395–398; these read SPQ, HCGWNSTLE, and FADQ. The disordered stretch occupies residues 446-477; it reads MGESDDAKERRRRAKELGDSAHKAVEEGGSSH. Positions 450 to 471 are enriched in basic and acidic residues; that stretch reads DDAKERRRRAKELGDSAHKAVE.

It belongs to the UDP-glycosyltransferase family. In terms of tissue distribution, elongating hypocotyls and root-specific. Expressed in the vascular system, in meristematic tissues of the root tip, and in the vasculature of the hypocotyl right after germination. In late stage of flower development, expressed in petals, and in abscission zones.

It localises to the membrane. Functionally, specifically catalyzes 23-O-glucosylation of brassinosteroids, resulting probably in their inactivation. Also, involved in the O-glucosylation of trans-zeatin and dihydrozeatin. Active in vitro on cis-zeatin, dihydrozeatin-9-N-Glc, and olomoucine. Also involved in the detoxification of the Fusarium mycotoxin deoxynivalenol by the transfer of glucose from UDP-glucose to the hydroxyl group at C-3. Possesses low quercetin 7-O-glucosyltransferase and 4'-O-glucosyltransferase activities in vitro. The chain is UDP-glycosyltransferase 73C5 (UGT73C5) from Arabidopsis thaliana (Mouse-ear cress).